The chain runs to 348 residues: MSKQTLILLYGGRSAEREVSVLSAESVMRAVDYNAFEVKTYFITQSGDFIKTQEFIETPGDDEKLMTNDTVEASQAIKPSDIYEEDAVVFPVLHGPMGEDGSIQGFLETLKLPYVGTNVLSSSVAMDKIMTKRILEVAGVPQVAYTVYIEGEDLEAAVAETLEKLTFPVFVKPANMGSSVGISKAENESELRSAIDLALKYDSRILIEQGVVAREIEVGILGNTTVKTTDPGEVVKDVAFYDYQAKYIDNKITMDIPARVPVEVMTQMRAYAAKAFRALGGCGLARCDFFLTEDGAIYLNELNTMPGFTQWSMYPLLWENMGLSYSDLIKELVVLGQEMFDKRESHLI.

Positions 132–334 constitute an ATP-grasp domain; the sequence is KRILEVAGVP…YSDLIKELVV (203 aa). 162–217 provides a ligand contact to ATP; sequence LEKLTFPVFVKPANMGSSVGISKAENESELRSAIDLALKYDSRILIEQGVVAREIE. Residues Asp-288, Glu-301, and Asn-303 each coordinate Mg(2+).

Belongs to the D-alanine--D-alanine ligase family. Requires Mg(2+) as cofactor. The cofactor is Mn(2+).

Its subcellular location is the cytoplasm. It catalyses the reaction 2 D-alanine + ATP = D-alanyl-D-alanine + ADP + phosphate + H(+). It functions in the pathway cell wall biogenesis; peptidoglycan biosynthesis. In terms of biological role, cell wall formation. This Streptococcus thermophilus (strain ATCC BAA-250 / LMG 18311) protein is D-alanine--D-alanine ligase.